The chain runs to 205 residues: uncharacterized protein (205 aa).

Residues 1 to 19 form the signal peptide; it reads MKTLCVLSIFLALLGGLCT. Over residues 40–133 the composition is skewed to low complexity; the sequence is VSSVASTSTP…PKTSKNNPKT (94 aa). The interval 40–135 is disordered; the sequence is VSSVASTSTP…TSKNNPKTQE (96 aa). The chain crosses the membrane as a helical span at residues 147 to 167; the sequence is GILYLFILLLIIFVIILICFI.

The protein localises to the host membrane. This is an uncharacterized protein from Equine herpesvirus 2 (strain 86/87) (EHV-2).